A 964-amino-acid chain; its full sequence is Iron-responsive element-binding protein 2 (964 aa).

[4Fe-4S] cluster-binding residues include Cys513, Cys579, and Cys582.

Belongs to the aconitase/IPM isomerase family. In terms of assembly, interacts with RBCK1 only in iron-rich conditions. Interacts (when associated with the 4Fe-4S) with FBXL5. Interacts with CIAO1 and CIAO2A. The cofactor is [4Fe-4S] cluster. Post-translationally, ubiquitinated and degraded by the proteasome in presence of high level of iron and oxygen. Ubiquitinated by a SCF complex containing FBXL5. Upon iron and oxygen depletion FBXL5 is degraded, preventing ubiquitination and allowing its RNA-binding activity.

The protein localises to the cytoplasm. RNA-binding protein that binds to iron-responsive elements (IRES), which are stem-loop structures found in the 5'-UTR of ferritin, and delta aminolevulinic acid synthase mRNAs, and in the 3'-UTR of transferrin receptor mRNA. Binding to the IRE element in ferritin results in the repression of its mRNA translation. Binding of the protein to the transferrin receptor mRNA inhibits the degradation of this otherwise rapidly degraded mRNA. This Sus scrofa (Pig) protein is Iron-responsive element-binding protein 2 (IREB2).